The primary structure comprises 645 residues: 1,4-alpha-glucan branching enzyme GlgB (645 aa).

D309 functions as the Nucleophile in the catalytic mechanism. E352 serves as the catalytic Proton donor. The interval 619–645 (VKTRKGSKKQDGSKTKVRSNVTSRGKR) is disordered. The segment covering 636–645 (RSNVTSRGKR) has biased composition (polar residues).

Belongs to the glycosyl hydrolase 13 family. GlgB subfamily. Monomer.

The catalysed reaction is Transfers a segment of a (1-&gt;4)-alpha-D-glucan chain to a primary hydroxy group in a similar glucan chain.. Its pathway is glycan biosynthesis; glycogen biosynthesis. Its function is as follows. Catalyzes the formation of the alpha-1,6-glucosidic linkages in glycogen by scission of a 1,4-alpha-linked oligosaccharide from growing alpha-1,4-glucan chains and the subsequent attachment of the oligosaccharide to the alpha-1,6 position. This Bacillus cereus (strain Q1) protein is 1,4-alpha-glucan branching enzyme GlgB.